The following is a 234-amino-acid chain: LRP chaperone MESD (234 aa).

The N-terminal stretch at 1 to 33 (MAASRWARKAVVLLCASDLLLLLLLLPPPGSCA) is a signal peptide. The tract at residues 1 to 164 (MAASRWARKA…DRAIFMLRDG (164 aa)) is chaperone domain. 2 disordered regions span residues 31–95 (SCAA…DFSK) and 187–234 (GQVY…REDL). Residues 54-70 (DIRDYNDADMARLLEQW) are compositionally biased toward basic and acidic residues. Positions 71 to 80 (EKDDDIEEGD) are enriched in acidic residues. Residues 165–204 (SYAWEIKDFLVGQDRCADVTLEGQVYPGKGGGSKEKNKTK) form an escort domain region. Positions 196–234 (GSKEKNKTKQDKGKKKKEGDLKSRSSKEENRAGNKREDL) are enriched in basic and acidic residues. An N-linked (GlcNAc...) asparagine glycan is attached at Asn-201. Positions 231–234 (REDL) match the Prevents secretion from ER motif.

The protein belongs to the MESD family. As to quaternary structure, monomer. Interacts with LRP5; the interaction prevents LRP5 from forming aggregates and chaperones LRP6 to the plasma membrane. Interacts with LRP6; the interaction prevents LRP6 from forming aggregates and chaperones LRP6 to the plasma membrane. Interacts with LRP4; the interaction promotes glycosylation of LRP4 and its cell-surface expression.

It localises to the endoplasmic reticulum. Functionally, chaperone specifically assisting the folding of beta-propeller/EGF modules within the family of low-density lipoprotein receptors (LDLRs). Acts as a modulator of the Wnt pathway through chaperoning the coreceptors of the canonical Wnt pathway, LRP5 and LRP6, to the plasma membrane. Essential for specification of embryonic polarity and mesoderm induction. Plays an essential role in neuromuscular junction (NMJ) formation by promoting cell-surface expression of LRP4. May regulate phagocytosis of apoptotic retinal pigment epithelium (RPE) cells. This is LRP chaperone MESD from Homo sapiens (Human).